A 56-amino-acid polypeptide reads, in one-letter code: Large ribosomal subunit protein bL32 (56 aa).

Positions 1-26 (MAVQQNKPTRSKRGMRRSHDSLTTAA) are disordered.

The protein belongs to the bacterial ribosomal protein bL32 family.

The polypeptide is Large ribosomal subunit protein bL32 (Erwinia tasmaniensis (strain DSM 17950 / CFBP 7177 / CIP 109463 / NCPPB 4357 / Et1/99)).